A 63-amino-acid chain; its full sequence is ATP synthase F(0) complex subunit 8 (63 aa).

Residues 8–24 (TWFLTILSVMLTLFTLL) traverse the membrane as a helical segment. Lysine 57 carries the N6-acetyllysine modification.

This sequence belongs to the ATPase protein 8 family. As to quaternary structure, component of the ATP synthase complex composed at least of ATP5F1A/subunit alpha, ATP5F1B/subunit beta, ATP5MC1/subunit c (homooctomer), MT-ATP6/subunit a, MT-ATP8/subunit 8, ATP5ME/subunit e, ATP5MF/subunit f, ATP5MG/subunit g, ATP5MK/subunit k, ATP5MJ/subunit j, ATP5F1C/subunit gamma, ATP5F1D/subunit delta, ATP5F1E/subunit epsilon, ATP5PF/subunit F6, ATP5PB/subunit b, ATP5PD/subunit d, ATP5PO/subunit OSCP. ATP synthase complex consists of a soluble F(1) head domain (subunits alpha(3) and beta(3)) - the catalytic core - and a membrane F(0) domain - the membrane proton channel (subunits c, a, 8, e, f, g, k and j). These two domains are linked by a central stalk (subunits gamma, delta, and epsilon) rotating inside the F1 region and a stationary peripheral stalk (subunits F6, b, d, and OSCP). Interacts with PRICKLE3.

It localises to the mitochondrion membrane. Functionally, subunit 8, of the mitochondrial membrane ATP synthase complex (F(1)F(0) ATP synthase or Complex V) that produces ATP from ADP in the presence of a proton gradient across the membrane which is generated by electron transport complexes of the respiratory chain. ATP synthase complex consist of a soluble F(1) head domain - the catalytic core - and a membrane F(1) domain - the membrane proton channel. These two domains are linked by a central stalk rotating inside the F(1) region and a stationary peripheral stalk. During catalysis, ATP synthesis in the catalytic domain of F(1) is coupled via a rotary mechanism of the central stalk subunits to proton translocation. In vivo, can only synthesize ATP although its ATP hydrolase activity can be activated artificially in vitro. Part of the complex F(0) domain. This Physeter macrocephalus (Sperm whale) protein is ATP synthase F(0) complex subunit 8.